We begin with the raw amino-acid sequence, 121 residues long: Large ribosomal subunit protein bL19 (121 aa).

The protein belongs to the bacterial ribosomal protein bL19 family.

Functionally, this protein is located at the 30S-50S ribosomal subunit interface and may play a role in the structure and function of the aminoacyl-tRNA binding site. The protein is Large ribosomal subunit protein bL19 of Gloeobacter violaceus (strain ATCC 29082 / PCC 7421).